A 339-amino-acid polypeptide reads, in one-letter code: Glutamyl-tRNA reductase (339 aa).

Residues 50-53 (TCHR), Ser102, 107-109 (ETE), and Gln113 each bind substrate. Cys51 serves as the catalytic Nucleophile. 181-186 (GYSDIN) lines the NADP(+) pocket.

This sequence belongs to the glutamyl-tRNA reductase family. In terms of assembly, homodimer.

It catalyses the reaction (S)-4-amino-5-oxopentanoate + tRNA(Glu) + NADP(+) = L-glutamyl-tRNA(Glu) + NADPH + H(+). It functions in the pathway porphyrin-containing compound metabolism; protoporphyrin-IX biosynthesis; 5-aminolevulinate from L-glutamyl-tRNA(Glu): step 1/2. Functionally, catalyzes the NADPH-dependent reduction of glutamyl-tRNA(Glu) to glutamate 1-semialdehyde (GSA). This Chlamydia pneumoniae (Chlamydophila pneumoniae) protein is Glutamyl-tRNA reductase.